The following is a 477-amino-acid chain: Bifunctional protein HldE (477 aa).

The ribokinase stretch occupies residues 1 to 321 (MKILKSFTPR…EYEASLHKST (321 aa)). Position 198 to 201 (198 to 201 (NKKE)) interacts with ATP. The active site involves aspartate 266. A cytidylyltransferase region spans residues 348–477 (FTNGCFDILH…IQKIKGDLHV (130 aa)).

In the N-terminal section; belongs to the carbohydrate kinase PfkB family. This sequence in the C-terminal section; belongs to the cytidylyltransferase family. As to quaternary structure, homodimer.

The enzyme catalyses D-glycero-beta-D-manno-heptose 7-phosphate + ATP = D-glycero-beta-D-manno-heptose 1,7-bisphosphate + ADP + H(+). The catalysed reaction is D-glycero-beta-D-manno-heptose 1-phosphate + ATP + H(+) = ADP-D-glycero-beta-D-manno-heptose + diphosphate. Its pathway is nucleotide-sugar biosynthesis; ADP-L-glycero-beta-D-manno-heptose biosynthesis; ADP-L-glycero-beta-D-manno-heptose from D-glycero-beta-D-manno-heptose 7-phosphate: step 1/4. It functions in the pathway nucleotide-sugar biosynthesis; ADP-L-glycero-beta-D-manno-heptose biosynthesis; ADP-L-glycero-beta-D-manno-heptose from D-glycero-beta-D-manno-heptose 7-phosphate: step 3/4. Catalyzes the phosphorylation of D-glycero-D-manno-heptose 7-phosphate at the C-1 position to selectively form D-glycero-beta-D-manno-heptose-1,7-bisphosphate. Its function is as follows. Catalyzes the ADP transfer from ATP to D-glycero-beta-D-manno-heptose 1-phosphate, yielding ADP-D-glycero-beta-D-manno-heptose. The sequence is that of Bifunctional protein HldE from Sulfurimonas denitrificans (strain ATCC 33889 / DSM 1251) (Thiomicrospira denitrificans (strain ATCC 33889 / DSM 1251)).